A 134-amino-acid polypeptide reads, in one-letter code: Large ribosomal subunit protein eL28 (134 aa).

A Phosphoserine modification is found at serine 60.

This sequence belongs to the eukaryotic ribosomal protein eL28 family. Component of the large ribosomal subunit (LSU). Mature yeast ribosomes consist of a small (40S) and a large (60S) subunit. The 40S small subunit contains 1 molecule of ribosomal RNA (18S rRNA) and at least 33 different proteins. The large 60S subunit contains 3 rRNA molecules (25S, 5.8S and 5S rRNA) and at least 46 different proteins.

The protein resides in the cytoplasm. Its function is as follows. Component of the ribosome, a large ribonucleoprotein complex responsible for the synthesis of proteins in the cell. The small ribosomal subunit (SSU) binds messenger RNAs (mRNAs) and translates the encoded message by selecting cognate aminoacyl-transfer RNA (tRNA) molecules. The large subunit (LSU) contains the ribosomal catalytic site termed the peptidyl transferase center (PTC), which catalyzes the formation of peptide bonds, thereby polymerizing the amino acids delivered by tRNAs into a polypeptide chain. The nascent polypeptides leave the ribosome through a tunnel in the LSU and interact with protein factors that function in enzymatic processing, targeting, and the membrane insertion of nascent chains at the exit of the ribosomal tunnel. In Schizosaccharomyces pombe (strain 972 / ATCC 24843) (Fission yeast), this protein is Large ribosomal subunit protein eL28 (rpl44).